Reading from the N-terminus, the 166-residue chain is NAD(P)H-quinone oxidoreductase subunit I, chloroplastic (166 aa).

4Fe-4S ferredoxin-type domains lie at 55 to 84 (GRIH…VDWK) and 95 to 124 (LNYS…MTEE). Residues C64, C67, C70, C74, C104, C107, C110, and C114 each coordinate [4Fe-4S] cluster.

It belongs to the complex I 23 kDa subunit family. NDH is composed of at least 16 different subunits, 5 of which are encoded in the nucleus. It depends on [4Fe-4S] cluster as a cofactor.

Its subcellular location is the plastid. It is found in the chloroplast thylakoid membrane. It carries out the reaction a plastoquinone + NADH + (n+1) H(+)(in) = a plastoquinol + NAD(+) + n H(+)(out). The enzyme catalyses a plastoquinone + NADPH + (n+1) H(+)(in) = a plastoquinol + NADP(+) + n H(+)(out). In terms of biological role, NDH shuttles electrons from NAD(P)H:plastoquinone, via FMN and iron-sulfur (Fe-S) centers, to quinones in the photosynthetic chain and possibly in a chloroplast respiratory chain. The immediate electron acceptor for the enzyme in this species is believed to be plastoquinone. Couples the redox reaction to proton translocation, and thus conserves the redox energy in a proton gradient. This Aphanactis jamesoniana protein is NAD(P)H-quinone oxidoreductase subunit I, chloroplastic.